Here is a 456-residue protein sequence, read N- to C-terminus: tRNA modification GTPase MnmE (456 aa).

(6S)-5-formyl-5,6,7,8-tetrahydrofolate-binding residues include R24, E81, and K120. The region spanning 216 to 379 (GMTVVIAGRP…LRDHLKGCMG (164 aa)) is the TrmE-type G domain. A K(+)-binding site is contributed by N226. GTP contacts are provided by residues 226–231 (NAGKSS), 245–251 (TDIAGTT), 270–273 (DTAG), and 335–338 (NKAD). S230 is a Mg(2+) binding site. T245, I247, and T250 together coordinate K(+). Residue T251 coordinates Mg(2+). K456 serves as a coordination point for (6S)-5-formyl-5,6,7,8-tetrahydrofolate.

Belongs to the TRAFAC class TrmE-Era-EngA-EngB-Septin-like GTPase superfamily. TrmE GTPase family. Homodimer. Heterotetramer of two MnmE and two MnmG subunits. K(+) serves as cofactor.

Its subcellular location is the cytoplasm. In terms of biological role, exhibits a very high intrinsic GTPase hydrolysis rate. Involved in the addition of a carboxymethylaminomethyl (cmnm) group at the wobble position (U34) of certain tRNAs, forming tRNA-cmnm(5)s(2)U34. The chain is tRNA modification GTPase MnmE from Pseudomonas putida (strain ATCC 47054 / DSM 6125 / CFBP 8728 / NCIMB 11950 / KT2440).